Consider the following 359-residue polypeptide: Peptide chain release factor 1 (359 aa).

An N5-methylglutamine modification is found at Q236.

Belongs to the prokaryotic/mitochondrial release factor family. Post-translationally, methylated by PrmC. Methylation increases the termination efficiency of RF1.

The protein localises to the cytoplasm. Its function is as follows. Peptide chain release factor 1 directs the termination of translation in response to the peptide chain termination codons UAG and UAA. The chain is Peptide chain release factor 1 from Streptococcus pyogenes serotype M6 (strain ATCC BAA-946 / MGAS10394).